The following is a 250-amino-acid chain: NAD(P)H-quinone oxidoreductase subunit K, chloroplastic (250 aa).

4 residues coordinate [4Fe-4S] cluster: cysteine 61, cysteine 62, cysteine 126, and cysteine 157.

It belongs to the complex I 20 kDa subunit family. In terms of assembly, NDH is composed of at least 16 different subunits, 5 of which are encoded in the nucleus. Requires [4Fe-4S] cluster as cofactor.

It is found in the plastid. The protein resides in the chloroplast thylakoid membrane. The catalysed reaction is a plastoquinone + NADH + (n+1) H(+)(in) = a plastoquinol + NAD(+) + n H(+)(out). The enzyme catalyses a plastoquinone + NADPH + (n+1) H(+)(in) = a plastoquinol + NADP(+) + n H(+)(out). In terms of biological role, NDH shuttles electrons from NAD(P)H:plastoquinone, via FMN and iron-sulfur (Fe-S) centers, to quinones in the photosynthetic chain and possibly in a chloroplast respiratory chain. The immediate electron acceptor for the enzyme in this species is believed to be plastoquinone. Couples the redox reaction to proton translocation, and thus conserves the redox energy in a proton gradient. This chain is NAD(P)H-quinone oxidoreductase subunit K, chloroplastic, found in Angiopteris evecta (Mule's foot fern).